Here is a 247-residue protein sequence, read N- to C-terminus: 5'-nucleotidase SurE (247 aa).

Asp8, Asp9, Ser39, and Asn91 together coordinate a divalent metal cation.

The protein belongs to the SurE nucleotidase family. It depends on a divalent metal cation as a cofactor.

Its subcellular location is the cytoplasm. The catalysed reaction is a ribonucleoside 5'-phosphate + H2O = a ribonucleoside + phosphate. Functionally, nucleotidase that shows phosphatase activity on nucleoside 5'-monophosphates. In Azoarcus sp. (strain BH72), this protein is 5'-nucleotidase SurE.